We begin with the raw amino-acid sequence, 455 residues long: Venom prothrombin activator trocarin-D (455 aa).

Residues 1–20 form the signal peptide; the sequence is MAPQLLLCLILTFLWSLPEA. Positions 21–40 are excised as a propeptide; sequence ESNVFLKSKVANRFLQRTKR. Positions 41 to 86 constitute a Gla domain; the sequence is SNSLFEEIRPGNIERECIEEKCSKEEAREVFEDNEKTETFWNVYVD. A 4-carboxyglutamate mark is found at E46, E47, E54, E56, E59, E60, E65, E66, E69, E72, and E75. The cysteines at positions 57 and 62 are disulfide-linked. Positions 86–122 constitute an EGF-like 1; calcium-binding domain; that stretch reads DGDQCSSNPCHYRGTCKDGIGSYTCTCLPNYEGKNCE. 11 disulfides stabilise this stretch: C90/C101, C95/C110, C112/C121, C129/C140, C136/C149, C151/C164, C172/C328, C216/C221, C236/C252, C376/C390, and C401/C429. Residue S92 is glycosylated (O-linked (Hex...) serine). Residues 129–164 form the EGF-like 2 domain; the sequence is CRVDNGNCWHFCKRVQSETQCSCAESYRLGVDGHSC. The propeptide at 182-209 is activation peptide; sequence REASLPDFVQSQKATLLKKSDNPSPDIR. The Peptidase S1 domain maps to 210–453; the sequence is IVNGMDCKLG…FIPWIKKIMS (244 aa). The active-site Charge relay system is H251. N-linked (GlcNAc...) asparagine glycosylation is present at N254. The active-site Charge relay system is D308. Catalysis depends on S405, which acts as the Charge relay system.

It belongs to the peptidase S1 family. Snake venom subfamily. Heterodimer of a light chain and a heavy chain; disulfide-linked. Gamma-carboxyglutamate residues are formed by vitamin K dependent carboxylation. These residues are essential for the binding of calcium. Post-translationally, the O-linked saccharides at Ser-92 are a mixture of Xyl-Glc, and Glc along with smaller amounts of Xyl-GlcNAc, GlcNAc, Gal, GalNAc, Xyl-Gal, and Xyl-GalNAc, suggesting that the glycosyl transferases responsible for this modification are non-specific. The N-linked carbohydrate at Asn-254 (Asn-45 of the heavy chain) is a sialylated and diantennary oligosaccharide. As to expression, expressed by the venom gland.

The protein resides in the secreted. It catalyses the reaction Selective cleavage of Arg-|-Thr and then Arg-|-Ile bonds in prothrombin to form thrombin.. Activated by calcium and phospholipids. Snake prothrombin activator that attacks the hemostatic system of prey. This protein is functionally similar to blood coagulation factor Xa. Induces cyanosis and death in mice at 1 mg/kg body weight during blood clotting. The sequence is that of Venom prothrombin activator trocarin-D from Tropidechis carinatus (Australian rough-scaled snake).